A 162-amino-acid polypeptide reads, in one-letter code: Succinate dehydrogenase assembly factor 2-A, mitochondrial (162 aa).

A mitochondrion-targeting transit peptide spans 1–23; the sequence is MLRQLRLTMDISGWIFLPWRRSM.

The protein belongs to the SDHAF2 family. In terms of assembly, interacts with the flavoprotein subunit within the SDH catalytic dimer.

The protein resides in the mitochondrion matrix. In terms of biological role, plays an essential role in the assembly of succinate dehydrogenase (SDH), an enzyme complex (also referred to as respiratory complex II) that is a component of both the tricarboxylic acid (TCA) cycle and the mitochondrial electron transport chain, and which couples the oxidation of succinate to fumarate with the reduction of ubiquinone (coenzyme Q) to ubiquinol. Required for flavinylation (covalent attachment of FAD) of the flavoprotein subunit of the SDH catalytic dimer. This Drosophila erecta (Fruit fly) protein is Succinate dehydrogenase assembly factor 2-A, mitochondrial.